The sequence spans 197 residues: UPF0301 protein BAV3012 (197 aa).

Belongs to the UPF0301 (AlgH) family.

This is UPF0301 protein BAV3012 from Bordetella avium (strain 197N).